A 152-amino-acid polypeptide reads, in one-letter code: NAD(P)H-quinone oxidoreductase subunit N (152 aa).

This sequence belongs to the complex I NdhN subunit family. As to quaternary structure, NDH-1 can be composed of about 15 different subunits; different subcomplexes with different compositions have been identified which probably have different functions.

The protein resides in the cellular thylakoid membrane. The enzyme catalyses a plastoquinone + NADH + (n+1) H(+)(in) = a plastoquinol + NAD(+) + n H(+)(out). The catalysed reaction is a plastoquinone + NADPH + (n+1) H(+)(in) = a plastoquinol + NADP(+) + n H(+)(out). In terms of biological role, NDH-1 shuttles electrons from an unknown electron donor, via FMN and iron-sulfur (Fe-S) centers, to quinones in the respiratory and/or the photosynthetic chain. The immediate electron acceptor for the enzyme in this species is believed to be plastoquinone. Couples the redox reaction to proton translocation, and thus conserves the redox energy in a proton gradient. Cyanobacterial NDH-1 also plays a role in inorganic carbon-concentration. The polypeptide is NAD(P)H-quinone oxidoreductase subunit N (Prochlorococcus marinus (strain SARG / CCMP1375 / SS120)).